A 440-amino-acid polypeptide reads, in one-letter code: Asparagine--tRNA ligase (440 aa).

It belongs to the class-II aminoacyl-tRNA synthetase family. Homodimer.

It localises to the cytoplasm. It carries out the reaction tRNA(Asn) + L-asparagine + ATP = L-asparaginyl-tRNA(Asn) + AMP + diphosphate + H(+). This is Asparagine--tRNA ligase from Roseiflexus castenholzii (strain DSM 13941 / HLO8).